The primary structure comprises 199 residues: MNLFQRVKYNFEESIKTKTAAIELLVDPIVQAGELMSQCLLNEHKILSCGNGGSAADAQHFSSEMLNRFETERPSFPALALTTDASTVTAIANDYSYAEVFSKQIAGLGSTGDILLAISTSGHSKNILQAITAAHIRGMNVVALTGRDGGELFTLLGTDDIEIRVPAESTARIQETHALIIHCLCDIIDRKLIPSSEDH.

The 163-residue stretch at methionine 36–aspartate 198 folds into the SIS domain. Substrate is bound at residue asparagine 51 to glycine 53. Zn(2+) contacts are provided by histidine 60 and glutamate 64. Substrate is bound by residues glutamate 64, asparagine 93–aspartate 94, serine 119–serine 121, serine 124, and glutamine 174. Zn(2+)-binding residues include glutamine 174 and histidine 182.

The protein belongs to the SIS family. GmhA subfamily. In terms of assembly, homotetramer. Zn(2+) serves as cofactor.

It localises to the cytoplasm. The enzyme catalyses 2 D-sedoheptulose 7-phosphate = D-glycero-alpha-D-manno-heptose 7-phosphate + D-glycero-beta-D-manno-heptose 7-phosphate. It functions in the pathway carbohydrate biosynthesis; D-glycero-D-manno-heptose 7-phosphate biosynthesis; D-glycero-alpha-D-manno-heptose 7-phosphate and D-glycero-beta-D-manno-heptose 7-phosphate from sedoheptulose 7-phosphate: step 1/1. Its function is as follows. Catalyzes the isomerization of sedoheptulose 7-phosphate in D-glycero-D-manno-heptose 7-phosphate. This Coxiella burnetii (strain RSA 331 / Henzerling II) protein is Phosphoheptose isomerase.